Here is a 566-residue protein sequence, read N- to C-terminus: MKKFNIKSLTLLIVLLPLIVNANNIDSHLLEQNDIAKYVAQSDTVGSFFDRFSALLNYPIVVSKQAAKKRISGEFDLSNPEEMLEKLTLLVGLIWYKDGNALYIYDSGELISKVILLENISLNYLIQYLKDANLYDHRYPIRGNISDKTFYISGPPALVELVANTATLLDKQVSSIGTDKVNFGVIKLKNTFVSDRTYNMRGEDIVIPGVATVVERLLNNGKALSNRQAQNDPMPPFNITQKVSEDSNDFSFSSVTNSSILEDVSLIAYPETNSILVKGNDQQIQIIRDIITQLDVAKRHIELSLWIIDIDKSELNNLGVNWQGTASFGDSFGASFNMSSSASISTLDGNKFIASVMALNQKKKANVVSRPVILTQENIPAIFDNNRTFYVSLVGERNSSLEHVTYGTLINVIPRFSSRGQIEMSLTIEDGTGNSQSNYNYNNENTSVLPEVGRTKISTIARVPQGKSLLIGGYTHETNSNEIVSIPFLSSIPVIGNVFKYKTSNISNIVRVFLIQPREIKESSYYNTAEYKSLISEREIQKTTQIIPSETTLLEDEKSLVSYLNY.

A signal peptide spans 1-22; sequence MKKFNIKSLTLLIVLLPLIVNA.

Belongs to the bacterial secretin family. T3SS SctC subfamily. The core secretion machinery of the T3SS is composed of approximately 20 different proteins, including cytoplasmic components, a base, an export apparatus and a needle. This subunit is part of the base, which anchors the injectisome in the bacterial cell envelope. Forms a stable homooligomeric complex.

The protein localises to the cell outer membrane. Functionally, component of the type III secretion system (T3SS), also called injectisome, which is used to inject bacterial effector proteins into eukaryotic host cells. Forms a ring-shaped multimeric structure with an apparent central pore in the outer membrane. In Shigella sonnei, this protein is Type 3 secretion system secretin.